The chain runs to 562 residues: Protein wntless (562 aa).

Residues 1–13 (MSGTILENLSGRK) lie on the Cytoplasmic side of the membrane. A helical membrane pass occupies residues 14–34 (LSILVSSLMLCQVACFLMGGL). Topologically, residues 35–239 (YAPVPAGHQT…AIHQNGGFTQ (205 aa)) are lumenal. Asparagine 58 and asparagine 103 each carry an N-linked (GlcNAc...) asparagine glycan. The chain crosses the membrane as a helical span at residues 240-260 (VWLLLKTLLFPFVVGIMIWFW). Residues 261 to 270 (RRVHILQRSP) lie on the Cytoplasmic side of the membrane. The helical transmembrane segment at 271–291 (ALLEYMLLYLGGALSFLNLPL) threads the bilayer. Residues 292-311 (EYLTLSIEMPYMLLLSDVRQ) are Lumenal-facing. A helical membrane pass occupies residues 312–332 (GIFYAMLLSFWLVFAGEHMLI). The Cytoplasmic segment spans residues 333-344 (QDTPNKSTIRSR). The chain crosses the membrane as a helical span at residues 345–365 (YWKHLSAVVVGCISLFVFDIC). At 366 to 390 (ERGVQLRNPFYSIWTTPLGAKVAMS) the chain is on the lumenal side. The chain crosses the membrane as a helical span at residues 391–411 (FIVLAGVSAAIYFLFLCFMVW). Residues 412–441 (KVFKDIGDKRTSLPSMSQARRLHYEGLIYR) are Cytoplasmic-facing. Residues 442-462 (FKFLMLATLLCAGLTVAGFIM) form a helical membrane-spanning segment. Over 463–482 (GQMAEGHWKWNEDIEIQLTS) the chain is Lumenal. The chain crosses the membrane as a helical span at residues 483–503 (AFLTGVYGMWNIYIFALIILY). The Cytoplasmic portion of the chain corresponds to 504-562 (APSHKQWPTMRHSDETTQSNENIVASAASEEIEFSNLPSDSNPSEISSLTSFTRKVAFD).

Belongs to the wntless family. Interacts with wg; in the Golgi. Interacts with Vps35, a component of the retromer complex; wls stability is regulated by Vps35.

It is found in the presynaptic cell membrane. Its subcellular location is the postsynaptic cell membrane. The protein localises to the cell membrane. It localises to the endoplasmic reticulum membrane. The protein resides in the endosome membrane. It is found in the golgi apparatus membrane. Its function is as follows. A segment polarity gene required for wingless (wg)-dependent patterning processes, acting in both wg-sending cells and wg-target cells. In non-neuronal cells wls directs wg secretion. The wls traffic loop encompasses the Golgi, the cell surface, an endocytic compartment and a retrograde route leading back to the Golgi, and involves clathrin-mediated endocytosis and the retromer complex (a conserved protein complex consisting of Vps35 and Vps26). In neuronal cells (the larval motorneuron NMJ), the wg signal moves across the synapse via the release of wls-containing exosome-like vesicles. Postsynaptic wls is required for the trafficking of fz2 through the fz2-interacting protein Grip. This chain is Protein wntless, found in Drosophila virilis (Fruit fly).